A 380-amino-acid chain; its full sequence is Cystathionine beta-lyase (380 aa).

N6-(pyridoxal phosphate)lysine is present on K196.

The protein belongs to the trans-sulfuration enzymes family. Requires pyridoxal 5'-phosphate as cofactor.

Its subcellular location is the cytoplasm. The enzyme catalyses L,L-cystathionine + H2O = L-homocysteine + pyruvate + NH4(+). The catalysed reaction is an S-substituted L-cysteine + H2O = a thiol + pyruvate + NH4(+). It functions in the pathway amino-acid biosynthesis; L-methionine biosynthesis via de novo pathway; L-homocysteine from L-cystathionine: step 1/1. The enzymatic degradation of amino acids in cheese is believed to generate aroma compounds and therefore to be essential for flavor development. Cystathionine beta-lyase (CBL) can convert cystathionine to homocysteine but is also able to catalyze an alpha, gamma elimination. With methionine as a substrate, it produces volatile sulfur compounds which are important for flavor formation in Gouda cheese. The sequence is that of Cystathionine beta-lyase (metC) from Lactococcus lactis subsp. lactis (strain IL1403) (Streptococcus lactis).